Consider the following 320-residue polypeptide: Malate dehydrogenase (320 aa).

NAD(+) contacts are provided by residues Gly10–Gly15 and Asp34. The substrate site is built by Arg83 and Arg89. NAD(+) contacts are provided by residues Asn96 and Ile119–Asn121. Residues Asn121 and Arg152 each contribute to the substrate site. His176 functions as the Proton acceptor in the catalytic mechanism.

This sequence belongs to the LDH/MDH superfamily. MDH type 3 family.

The catalysed reaction is (S)-malate + NAD(+) = oxaloacetate + NADH + H(+). Its function is as follows. Catalyzes the reversible oxidation of malate to oxaloacetate. This chain is Malate dehydrogenase, found in Brucella canis (strain ATCC 23365 / NCTC 10854 / RM-666).